The primary structure comprises 94 residues: Large ribosomal subunit protein bL25 (94 aa).

The protein belongs to the bacterial ribosomal protein bL25 family. In terms of assembly, part of the 50S ribosomal subunit; part of the 5S rRNA/L5/L18/L25 subcomplex. Contacts the 5S rRNA. Binds to the 5S rRNA independently of L5 and L18.

This is one of the proteins that binds to the 5S RNA in the ribosome where it forms part of the central protuberance. In Salmonella gallinarum (strain 287/91 / NCTC 13346), this protein is Large ribosomal subunit protein bL25.